We begin with the raw amino-acid sequence, 284 residues long: MEMO1 family protein LS215_2219 (284 aa).

It belongs to the MEMO1 family.

This chain is MEMO1 family protein LS215_2219, found in Saccharolobus islandicus (strain L.S.2.15 / Lassen #1) (Sulfolobus islandicus).